Reading from the N-terminus, the 116-residue chain is MSNKVQRFIEAERELSQLKHWLKTTHKISIEEFVVLFKVYEAEKISGKELRDTLHFEMLWDTSKIDVIIRKIYKKELISKLRSETDERQVFYFYSTSQKKLLDKITKEIEVLSVTN.

A DNA-binding region (H-T-H motif) is located at residues 51–74 (RDTLHFEMLWDTSKIDVIIRKIYK).

Belongs to the SarA family.

The protein localises to the cytoplasm. In terms of biological role, part of the pathway by which MgrA and SarA control autolysis. The chain is HTH-type transcriptional regulator SarV (sarV) from Staphylococcus aureus (strain Mu50 / ATCC 700699).